A 207-amino-acid chain; its full sequence is Uridine kinase (207 aa).

Residue Gly13 to Thr20 coordinates ATP.

Belongs to the uridine kinase family.

Its subcellular location is the cytoplasm. It catalyses the reaction uridine + ATP = UMP + ADP + H(+). The catalysed reaction is cytidine + ATP = CMP + ADP + H(+). The protein operates within pyrimidine metabolism; CTP biosynthesis via salvage pathway; CTP from cytidine: step 1/3. It functions in the pathway pyrimidine metabolism; UMP biosynthesis via salvage pathway; UMP from uridine: step 1/1. The polypeptide is Uridine kinase (Ureaplasma urealyticum serovar 10 (strain ATCC 33699 / Western)).